A 30-amino-acid chain; its full sequence is Alanine carboxypeptidase (30 aa).

The catalysed reaction is Release of a C-terminal alanine from a peptide or a variety of pteroyl or acyl groups.. This Geobacillus stearothermophilus (Bacillus stearothermophilus) protein is Alanine carboxypeptidase.